A 712-amino-acid chain; its full sequence is Ribosomal RNA large subunit methyltransferase K/L (712 aa).

Positions 42–153 (QALRIVMWSR…KGRASLSIDL (112 aa)) constitute a THUMP domain.

It belongs to the methyltransferase superfamily. RlmKL family.

It localises to the cytoplasm. The catalysed reaction is guanosine(2445) in 23S rRNA + S-adenosyl-L-methionine = N(2)-methylguanosine(2445) in 23S rRNA + S-adenosyl-L-homocysteine + H(+). The enzyme catalyses guanosine(2069) in 23S rRNA + S-adenosyl-L-methionine = N(2)-methylguanosine(2069) in 23S rRNA + S-adenosyl-L-homocysteine + H(+). Functionally, specifically methylates the guanine in position 2445 (m2G2445) and the guanine in position 2069 (m7G2069) of 23S rRNA. The sequence is that of Ribosomal RNA large subunit methyltransferase K/L from Stenotrophomonas maltophilia (strain K279a).